The chain runs to 275 residues: TATA-box-binding protein (275 aa).

Disordered regions lie at residues 23-45 (EDES…FGMN) and 73-92 (GSMS…HTPA). 2 consecutive repeat copies span residues 103 to 179 (LENI…ARIV) and 193 to 270 (IQNM…YPIL).

This sequence belongs to the TBP family. Belongs to the TFIID complex together with the TBP-associated factors (TAFs). Binds DNA as monomer.

Its subcellular location is the nucleus. Functionally, general transcription factor that functions at the core of the DNA-binding multiprotein factor TFIID. Binding of TFIID to the TATA box is the initial transcriptional step of the pre-initiation complex (PIC), playing a role in the activation of eukaryotic genes transcribed by RNA polymerase II. This chain is TATA-box-binding protein, found in Artemia franciscana (Brine shrimp).